The sequence spans 292 residues: Nitrogenase iron protein 1 (292 aa).

12-19 (GKGGIGKS) serves as a coordination point for ATP. Cysteine 101 contributes to the [4Fe-4S] cluster binding site. ADP-ribosylarginine; by dinitrogenase reductase ADP-ribosyltransferase is present on arginine 104. Position 135 (cysteine 135) interacts with [4Fe-4S] cluster.

It belongs to the NifH/BchL/ChlL family. As to quaternary structure, homodimer. [4Fe-4S] cluster is required as a cofactor. The reversible ADP-ribosylation of Arg-104 inactivates the nitrogenase reductase and regulates nitrogenase activity.

It carries out the reaction N2 + 8 reduced [2Fe-2S]-[ferredoxin] + 16 ATP + 16 H2O = H2 + 8 oxidized [2Fe-2S]-[ferredoxin] + 2 NH4(+) + 16 ADP + 16 phosphate + 6 H(+). In terms of biological role, the key enzymatic reactions in nitrogen fixation are catalyzed by the nitrogenase complex, which has 2 components: the iron protein and the molybdenum-iron protein. In Paenibacillus durus (Paenibacillus azotofixans), this protein is Nitrogenase iron protein 1 (nifH1).